We begin with the raw amino-acid sequence, 71 residues long: uncharacterized protein (71 aa).

This is an uncharacterized protein from Autographa californica nuclear polyhedrosis virus (AcMNPV).